The chain runs to 679 residues: Tripartite terminase subunit 1 (679 aa).

The C3H1-type zinc finger occupies 180–208 (CIYCLNEHMMLPNQGESLPSLMMCVNCKH).

The protein belongs to the herpesviridae TRM1 protein family. As to quaternary structure, associates with TRM2 and TRM3 to form the tripartite terminase complex. Interacts with portal protein.

It localises to the host nucleus. In terms of biological role, component of the molecular motor that translocates viral genomic DNA in empty capsid during DNA packaging. Forms a tripartite terminase complex together with TRM2 and TRM3 in the host cytoplasm. Once the complex reaches the host nucleus, it interacts with the capsid portal vertex. This portal forms a ring in which genomic DNA is translocated into the capsid. TRM1 carries an endonuclease activity that plays an important role for the cleavage of concatemeric viral DNA into unit length genomes. This chain is Tripartite terminase subunit 1, found in Saimiriine herpesvirus 2 (strain 11) (SaHV-2).